A 92-amino-acid chain; its full sequence is PqqA binding protein (92 aa).

This sequence belongs to the PqqD family. As to quaternary structure, monomer. Interacts with PqqE.

It participates in cofactor biosynthesis; pyrroloquinoline quinone biosynthesis. Its function is as follows. Functions as a PqqA binding protein and presents PqqA to PqqE, in the pyrroloquinoline quinone (PQQ) biosynthetic pathway. This is PqqA binding protein from Xanthomonas oryzae pv. oryzae (strain PXO99A).